Consider the following 62-residue polypeptide: Large ribosomal subunit protein bL28 (62 aa).

This sequence belongs to the bacterial ribosomal protein bL28 family.

In Streptococcus uberis (strain ATCC BAA-854 / 0140J), this protein is Large ribosomal subunit protein bL28.